We begin with the raw amino-acid sequence, 229 residues long: Large ribosomal subunit protein uL1 (229 aa).

This sequence belongs to the universal ribosomal protein uL1 family. As to quaternary structure, part of the 50S ribosomal subunit.

In terms of biological role, binds directly to 23S rRNA. The L1 stalk is quite mobile in the ribosome, and is involved in E site tRNA release. Functionally, protein L1 is also a translational repressor protein, it controls the translation of the L11 operon by binding to its mRNA. This is Large ribosomal subunit protein uL1 from Actinobacillus succinogenes (strain ATCC 55618 / DSM 22257 / CCUG 43843 / 130Z).